The primary structure comprises 696 residues: SLIT and NTRK-like protein 1 (696 aa).

The signal sequence occupies residues 1-17 (MLLWILLLETSLCFAAG). The LRRNT 1 domain occupies 18-57 (NVTGDVCKEKICSCNEIEGDLHVDCEKKGFTSLQRFTAPT). Residues 18–622 (NVTGDVCKEK…SRVSISVLVP (605 aa)) lie on the Extracellular side of the membrane. 6 LRR repeats span residues 59-80 (QFYH…EFAN), 83-104 (NAVS…AFLG), 106-128 (QLVK…TFLG), 131-152 (DLEY…AFQD), 155-176 (KLEV…VFQY), and 178-199 (PITH…EVLE). Residues 212 to 263 (NPWDCTCDLLSLKEWLENIPKNALIGRVVCEAPTRLQGKDLNETTEQDLCPL) form the LRRCT 1 domain. The segment at 265-314 (NRVDSSLPAPPAQEETFAPGPLPTPFKTNGQEDHATPGSAPNGGTKIPGN) is disordered. Positions 332-373 (NKPLANSLPCPGGCSCDHIPGSGLKMNCNNRNVSSLADLKPK) constitute an LRRNT 2 domain. 6 LRR repeats span residues 376–397 (NVQE…HFVD), 400–421 (NLIL…TFKN), 424–445 (DLRW…KFAG), 448–469 (NLEY…TFNA), 472–493 (KLRI…VFAG), and 495–516 (SLSK…GVLD). In terms of domain architecture, LRRCT 2 spans 529-580 (NPWECSCTIVPFKQWAERLGSEVLMSDLKCETPVNFFRKDFMLLSNDEICPQ). The helical transmembrane segment at 623 to 643 (GLLLVFVTSAFTVVGMLVFIL) threads the bilayer. The Cytoplasmic segment spans residues 644-696 (RNRKRSKRRDANSSASEINSLQTVCDSSYWHNGPYNADGAHRVYDCGSHSLSD). At S695 the chain carries Phosphoserine; by CK2.

This sequence belongs to the SLITRK family. In terms of assembly, can form homodimers; homodimerization requires repeat LRR 2. Interacts with YWHAB, YWHAE, YWHAG, YWHAH, SFN, YWHAQ and YWHAZ. Post-translationally, undergoes proteolytic cleavage that results in shedding of the ectodomain and cleavage of the C-terminal cytoplasmic tail. Glycosylated. Phosphorylation at Ser-695 is necessary for proper function in promoting neurite outgrowth. In terms of tissue distribution, expressed predominantly in the frontal lobe of the cerebral cortex of the brain. Also expressed in some astrocytic brain tumors such as astrocytomas, oligodendrogliomas, glioblastomas, gangliogliomas and primitive neuroectodermal tumors.

The protein localises to the membrane. It localises to the secreted. The protein resides in the synapse. In terms of biological role, it is involved in synaptogenesis and promotes excitatory synapse differentiation. Enhances neuronal dendrite outgrowth. In Homo sapiens (Human), this protein is SLIT and NTRK-like protein 1 (SLITRK1).